A 246-amino-acid polypeptide reads, in one-letter code: Ribosomal RNA large subunit methyltransferase E (246 aa).

Positions 81, 83, 104, 120, and 144 each coordinate S-adenosyl-L-methionine. Lys-184 serves as the catalytic Proton acceptor.

This sequence belongs to the class I-like SAM-binding methyltransferase superfamily. RNA methyltransferase RlmE family.

The protein resides in the cytoplasm. It catalyses the reaction uridine(2552) in 23S rRNA + S-adenosyl-L-methionine = 2'-O-methyluridine(2552) in 23S rRNA + S-adenosyl-L-homocysteine + H(+). Its function is as follows. Specifically methylates the uridine in position 2552 of 23S rRNA at the 2'-O position of the ribose in the fully assembled 50S ribosomal subunit. This Agrobacterium fabrum (strain C58 / ATCC 33970) (Agrobacterium tumefaciens (strain C58)) protein is Ribosomal RNA large subunit methyltransferase E.